The primary structure comprises 627 residues: Polyadenylate-binding protein, cytoplasmic and nuclear (627 aa).

The span at 1-11 (MSAADANQVQE) shows a compositional bias: polar residues. Residues 1–46 (MSAADANQVQESLEKLNLDSAPVASTEETEQTASGETEEAADSAQV) are disordered. 4 RRM domains span residues 51–129 (ASLY…WSQR), 139–216 (GNIF…KHIS), 232–309 (TNVY…RAQK), and 335–412 (VNLF…LAQR). Over residues 511–535 (DFNNGANGGRQQRGYYPNRNQNQKG) the composition is skewed to low complexity. The segment at 511–537 (DFNNGANGGRQQRGYYPNRNQNQKGRQ) is disordered. Positions 537-618 (QQKDLAAIIA…ALTAFEEYKK (82 aa)) constitute a PABC domain.

Belongs to the polyadenylate-binding protein type-1 family.

Its subcellular location is the cytoplasm. It is found in the nucleus. Its function is as follows. Binds the poly(A) tail of mRNA. Appears to be an important mediator of the multiple roles of the poly(A) tail in mRNA biogenesis, stability and translation. In the nucleus, involved in both mRNA cleavage and polyadenylation. Is also required for efficient mRNA export to the cytoplasm. Acts in concert with a poly(A)-specific nuclease (PAN) to affect poly(A) tail shortening, which may occur concomitantly with either nucleocytoplasmic mRNA transport or translational initiation. In the cytoplasm, stimulates translation initiation and regulates mRNA decay through translation termination-coupled poly(A) shortening, probably mediated by PAN. In Debaryomyces hansenii (strain ATCC 36239 / CBS 767 / BCRC 21394 / JCM 1990 / NBRC 0083 / IGC 2968) (Yeast), this protein is Polyadenylate-binding protein, cytoplasmic and nuclear (PAB1).